The sequence spans 185 residues: TATA-box-binding protein (185 aa).

Repeat copies occupy residues 8 to 84 and 99 to 175.

It belongs to the TBP family.

Its function is as follows. General factor that plays a role in the activation of archaeal genes transcribed by RNA polymerase. Binds specifically to the TATA box promoter element which lies close to the position of transcription initiation. The protein is TATA-box-binding protein of Thermococcus sibiricus (strain DSM 12597 / MM 739).